The primary structure comprises 164 residues: 2-C-methyl-D-erythritol 2,4-cyclodiphosphate synthase (164 aa).

Residues D9 and H11 each coordinate a divalent metal cation. 4-CDP-2-C-methyl-D-erythritol 2-phosphate-binding positions include 9–11 (DAH) and 36–37 (HS). Residue H44 coordinates a divalent metal cation. 4-CDP-2-C-methyl-D-erythritol 2-phosphate is bound by residues 58–60 (DLG), 63–67 (FPDSD), 134–137 (TTTE), F141, and R144.

This sequence belongs to the IspF family. As to quaternary structure, homotrimer. A divalent metal cation serves as cofactor.

It catalyses the reaction 4-CDP-2-C-methyl-D-erythritol 2-phosphate = 2-C-methyl-D-erythritol 2,4-cyclic diphosphate + CMP. The protein operates within isoprenoid biosynthesis; isopentenyl diphosphate biosynthesis via DXP pathway; isopentenyl diphosphate from 1-deoxy-D-xylulose 5-phosphate: step 4/6. Functionally, involved in the biosynthesis of isopentenyl diphosphate (IPP) and dimethylallyl diphosphate (DMAPP), two major building blocks of isoprenoid compounds. Catalyzes the conversion of 4-diphosphocytidyl-2-C-methyl-D-erythritol 2-phosphate (CDP-ME2P) to 2-C-methyl-D-erythritol 2,4-cyclodiphosphate (ME-CPP) with a corresponding release of cytidine 5-monophosphate (CMP). In Alkalilimnicola ehrlichii (strain ATCC BAA-1101 / DSM 17681 / MLHE-1), this protein is 2-C-methyl-D-erythritol 2,4-cyclodiphosphate synthase.